The primary structure comprises 163 residues: Nucleotide-binding protein MUL_0671 (163 aa).

It belongs to the YajQ family.

Nucleotide-binding protein. This is Nucleotide-binding protein MUL_0671 from Mycobacterium ulcerans (strain Agy99).